Consider the following 398-residue polypeptide: NADH-ubiquinone oxidoreductase 49 kDa subunit (398 aa).

Belongs to the complex I 49 kDa subunit family.

The protein resides in the mitochondrion. It catalyses the reaction a ubiquinone + NADH + 5 H(+)(in) = a ubiquinol + NAD(+) + 4 H(+)(out). Core subunit of the mitochondrial membrane respiratory chain NADH dehydrogenase (Complex I) that is believed to belong to the minimal assembly required for catalysis. Complex I functions in the transfer of electrons from NADH to the respiratory chain. The immediate electron acceptor for the enzyme is believed to be ubiquinone. Component of the iron-sulfur (IP) fragment of the enzyme. Component of the iron-sulfur (IP) fragment of the enzyme. This is NADH-ubiquinone oxidoreductase 49 kDa subunit (NAD7) from Cafeteria roenbergensis (Marine flagellate).